We begin with the raw amino-acid sequence, 59 residues long: Large ribosomal subunit protein bL32 (59 aa).

The segment at 1–22 (MAVQQNKKSPSKRGMHRSHDFL) is disordered.

Belongs to the bacterial ribosomal protein bL32 family.

This is Large ribosomal subunit protein bL32 from Thiobacillus denitrificans (strain ATCC 25259 / T1).